Reading from the N-terminus, the 23-residue chain is Apolipophorin-1 (23 aa).

The span at 1 to 15 (SVKSEVDNFDKHLKA) shows a compositional bias: basic and acidic residues. The interval 1–23 (SVKSEVDNFDKHLKAESAPFNNE) is disordered.

In terms of tissue distribution, expressed in hemolymph.

The protein resides in the secreted. In terms of biological role, constitutes the major component of lipophorin, which mediates transport for various types of lipids in hemolymph. Acts by forming lipoprotein particles that bind lipoproteins and lipids. This is Apolipophorin-1 from Galleria mellonella (Greater wax moth).